A 309-amino-acid chain; its full sequence is Gamma-hemolysin component A (309 aa).

Residues 1-29 (MIKNKILTATLAVGLIAPLANPFIEISKA) form the signal peptide.

It belongs to the aerolysin family. In terms of assembly, toxicity requires sequential binding and synergistic association of a class S and a class F component which form heterooligomeric complexes. HlgA (class S) associates with HlgB (class F) thus forming an AB toxin in strains producing both gamma-hemolysins and leukocidins. HlgA and LukF-PV can also form a complex.

Its subcellular location is the secreted. In terms of biological role, toxin that seems to act by forming pores in the membrane of the cell. Has a hemolytic and a leucotoxic activity. The chain is Gamma-hemolysin component A (hlgA) from Staphylococcus aureus (strain COL).